The chain runs to 540 residues: Chaperonin GroEL (540 aa).

ATP-binding positions include 30–33 (TLGP), Lys-51, 87–91 (DGTTT), Gly-415, and Asp-495.

It belongs to the chaperonin (HSP60) family. Forms a cylinder of 14 subunits composed of two heptameric rings stacked back-to-back. Interacts with the co-chaperonin GroES.

It localises to the cytoplasm. It carries out the reaction ATP + H2O + a folded polypeptide = ADP + phosphate + an unfolded polypeptide.. Its function is as follows. Together with its co-chaperonin GroES, plays an essential role in assisting protein folding. The GroEL-GroES system forms a nano-cage that allows encapsulation of the non-native substrate proteins and provides a physical environment optimized to promote and accelerate protein folding. The protein is Chaperonin GroEL of Serratia ficaria.